We begin with the raw amino-acid sequence, 926 residues long: Alanine--tRNA ligase (926 aa).

4 residues coordinate Zn(2+): His-615, His-619, Cys-719, and His-723. The disordered stretch occupies residues 887 to 910 (RVGGGGGGPPDFAQGGGPDADALD). Over residues 888 to 904 (VGGGGGGPPDFAQGGGP) the composition is skewed to gly residues.

The protein belongs to the class-II aminoacyl-tRNA synthetase family. Requires Zn(2+) as cofactor.

It is found in the cytoplasm. It catalyses the reaction tRNA(Ala) + L-alanine + ATP = L-alanyl-tRNA(Ala) + AMP + diphosphate. Catalyzes the attachment of alanine to tRNA(Ala) in a two-step reaction: alanine is first activated by ATP to form Ala-AMP and then transferred to the acceptor end of tRNA(Ala). Also edits incorrectly charged Ser-tRNA(Ala) and Gly-tRNA(Ala) via its editing domain. The sequence is that of Alanine--tRNA ligase from Halorubrum lacusprofundi (strain ATCC 49239 / DSM 5036 / JCM 8891 / ACAM 34).